The primary structure comprises 340 residues: Putative D-lactate dehydrogenase (340 aa).

NAD(+)-binding positions include 153–154, aspartate 174, 206–207, 233–235, and aspartate 259; these read NI, TP, and VSR. Residue arginine 235 is part of the active site. Residue glutamate 264 is part of the active site. The Proton donor role is filled by histidine 296.

Belongs to the D-isomer specific 2-hydroxyacid dehydrogenase family.

It carries out the reaction (R)-lactate + NAD(+) = pyruvate + NADH + H(+). The polypeptide is Putative D-lactate dehydrogenase (ldhA) (Dictyostelium discoideum (Social amoeba)).